A 477-amino-acid polypeptide reads, in one-letter code: UDP-sulfoquinovose synthase, chloroplastic (477 aa).

Residues 1–21 (MAHLLSASCPSVISLSSSSSK) are disordered. A chloroplast-targeting transit peptide spans 1-86 (MAHLLSASCP…TNNSSSKPKR (86 aa)). NAD(+) is bound by residues 95-96 (YC), 115-119 (DNLVR), 158-159 (DI), R184, and N202. Residue R184 coordinates substrate. The substrate site is built by T228 and Y265. Residue T228 is part of the active site. NAD(+)-binding residues include Y265 and K269. Y265 functions as the Proton acceptor in the catalytic mechanism. Residue K269 is part of the active site. Q292 is a substrate binding site. V295 contributes to the NAD(+) binding site. Substrate contacts are provided by residues 322–325 (ALNR), 337–339 (TVY), and 410–412 (RVE).

The protein belongs to the NAD(P)-dependent epimerase/dehydratase family. In terms of assembly, homodimer. NAD(+) serves as cofactor.

It is found in the plastid. The protein resides in the chloroplast. It catalyses the reaction sulfite + UDP-alpha-D-glucose + H(+) = UDP-alpha-D-6-sulfoquinovose + H2O. Its activity is regulated as follows. Concentrations above 100 uM sulfite inhibit the reaction. In terms of biological role, involved in the biosynthesis of sulfolipids found in thylakoid membranes. Converts UDP-glucose and sulfite to the sulfolipid head group precursor UDP-sulfoquinovose. This chain is UDP-sulfoquinovose synthase, chloroplastic (SQD1), found in Arabidopsis thaliana (Mouse-ear cress).